A 483-amino-acid polypeptide reads, in one-letter code: Pre-glycoprotein polyprotein GP complex (483 aa).

Gly-2 carries the N-myristoyl glycine; by host lipid modification. Residues 2–17 (GQLVSFIGEIPAIVHE) lie on the Extracellular side of the membrane. A helical membrane pass occupies residues 18 to 32 (ALNVALIAVSIIAIM). A topological domain (cytoplasmic) is located at residue Lys-33. A helical membrane pass occupies residues 34-53 (GLINIWKSGLFQLIMFLILA). 2 consecutive stretches face the extracellular side: residues 54–58 (GRSCS) and 59–422 (ISIG…SLVD). Residue Cys-57 participates in Zn(2+) binding. 4 N-linked (GlcNAc...) asparagine; by host glycosylation sites follow: Asn-73, Asn-88, Asn-130, and Asn-179. 5 disulfide bridges follow: Cys-85–Cys-223, Cys-186–Cys-204, Cys-269–Cys-282, Cys-291–Cys-300, and Cys-354–Cys-375. Asn-216 is a glycosylation site (N-linked (GlcNAc...) asparagine; by host). 4 N-linked (GlcNAc...) asparagine; by host glycosylation sites follow: Asn-355, Asn-363, Asn-380, and Asn-385. A helical transmembrane segment spans residues 423–443 (LCFWSTLFYTASIFLHLLHIP). The Cytoplasmic portion of the chain corresponds to 444-483 (THRHIIGEGCPKPHRLTSDSLCACGFFQLKGRPTRWARIP). 6 residues coordinate Zn(2+): His-445, His-447, Cys-453, His-457, Cys-465, and Cys-467.

The protein belongs to the arenaviridae GPC protein family. In terms of assembly, homotetramer; disulfide-linked. Homotetramer. GP2 homotetramers bind through ionic interactions with GP1 homotetramers to form the GP complex together with the stable signal peptide. The GP-C polyprotein interacts with the host protease MBTPS1/SKI-1 resulting in the polyprotein processing. Post-translationally, specific enzymatic cleavages in vivo yield mature proteins. GP-C polyprotein is cleaved in the endoplasmic reticulum by the host protease MBTPS1. Only cleaved glycoprotein is incorporated into virions. In terms of processing, the SSP remains stably associated with the GP complex following cleavage by signal peptidase and plays crucial roles in the trafficking of GP through the secretory pathway. Myristoylation is necessary for GP2-mediated fusion activity.

Its subcellular location is the virion membrane. It localises to the host endoplasmic reticulum membrane. It is found in the host Golgi apparatus membrane. The protein resides in the host cell membrane. Functionally, class I viral fusion protein that directs fusion of viral and host endosomal membranes, leading to delivery of the nucleocapsid into the cytoplasm. Membrane fusion is mediated by irreversible conformational changes induced upon acidification in the endosome. Stable signal peptide (SSP): cleaved and functions as a signal peptide. In addition, it is also retained as the third component of the GP complex. The SSP is required for efficient glycoprotein expression, post-translational maturation cleavage of GP1 and GP2, glycoprotein transport to the cell surface plasma membrane, formation of infectious virus particles, and acid pH-dependent glycoprotein-mediated cell fusion. Its function is as follows. Interacts with the host receptor. The polypeptide is Pre-glycoprotein polyprotein GP complex (Peromyscus californicus (California mouse)).